Reading from the N-terminus, the 329-residue chain is Vitamin B12 import system permease protein BtuC (329 aa).

9 consecutive transmembrane segments (helical) span residues 18–38 (WLLS…CAGE), 64–84 (LAVL…QALF), 91–111 (PGLL…VLLG), 115–135 (LPGW…TLIL), 149–169 (LLAG…AIYF), 191–208 (WQQS…IWIC), 243–263 (GWMV…GLVI), 277–297 (VLLP…DVVA), and 305–325 (ELPI…WLLL).

It belongs to the binding-protein-dependent transport system permease family. FecCD subfamily. As to quaternary structure, the complex is composed of two ATP-binding proteins (BtuD), two transmembrane proteins (BtuC) and a solute-binding protein (BtuF).

It localises to the cell inner membrane. In terms of biological role, part of the ABC transporter complex BtuCDF involved in vitamin B12 import. Involved in the translocation of the substrate across the membrane. This Salmonella arizonae (strain ATCC BAA-731 / CDC346-86 / RSK2980) protein is Vitamin B12 import system permease protein BtuC.